Reading from the N-terminus, the 315-residue chain is MSQTTPAVRTFQDLILALQNYWAEQGCVVLQPYDMEVGAGTFHTATFLRAIGPETWNAAYVQPSRRPTDGRYGENPNRLQHYYQFQVVLKPNPENFQELYLGSLKAIGIDPLVHDIRFVEDNWESPTLGAWGLGWEIWLNGMEVTQFTYFQQVGGIECYPVTGEITYGLERLAMYLQGVDSVYDLIWTDGPFGKVTYGDVFHQNEVEQSTFNFEHANVPKLFELFDFYESEANRLIELELPLPTYEMVLKASHTFNLLDARRAISVTERQRYILRVRTLARAVAQSYLQARARLGFPMATPELRDEVLAKLKEAE.

This sequence belongs to the class-II aminoacyl-tRNA synthetase family. As to quaternary structure, tetramer of two alpha and two beta subunits.

It localises to the cytoplasm. The catalysed reaction is tRNA(Gly) + glycine + ATP = glycyl-tRNA(Gly) + AMP + diphosphate. This is Glycine--tRNA ligase alpha subunit from Pseudomonas paraeruginosa (strain DSM 24068 / PA7) (Pseudomonas aeruginosa (strain PA7)).